The primary structure comprises 707 residues: Toxin RTX-I translocation ATP-binding protein (707 aa).

The Peptidase C39 domain maps to 1–125; sequence MDFYREEDYG…SLYQGKLILV (125 aa). His-83 is a catalytic residue. One can recognise an ABC transmembrane type-1 domain in the interval 154-436; the sequence is FIETLIVSIF…LAQLWQDFQQ (283 aa). Transmembrane regions (helical) follow at residues 158–178, 188–208, 295–315, 387–407, and 410–430; these read LIVS…FQVV, FSTL…EIVL, LVIL…SPIL, VVMV…DLSI, and LIAF…LAQL. Residues 468 to 703 enclose the ABC transporter domain; it reads ITFRNIRFRY…PNGLYHYLHQ (236 aa). 502–509 contributes to the ATP binding site; that stretch reads GRSGSGKS.

It belongs to the ABC transporter superfamily. Protein-1 exporter (TC 3.A.1.109) family. Homodimer.

It localises to the cell membrane. Functionally, involved in the transport of the toxin RTX-I as well as that of RTX-II. The protein is Toxin RTX-I translocation ATP-binding protein (apxIB) of Actinobacillus pleuropneumoniae (Haemophilus pleuropneumoniae).